Reading from the N-terminus, the 724-residue chain is WW domain-containing protein ZK1098.1 (724 aa).

WW domains lie at 78–111 (PSVESDWSVHTNEKGTPYYHNRVTKQTSWIKPDV) and 123–156 (QPQQGQWKEFMSDDGKPYYYNTLTKKTQWVKPDG). 6 FF domains span residues 224–282 (KKRQ…WKVQ), 295–349 (IKKS…CIDF), 353–422 (RDKE…HIKQ), 442–502 (QRKV…FVED), 507–562 (YTED…LIEK), and 578–632 (KRRL…YKNG). The disordered stretch occupies residues 626-724 (FNHYKNGTSG…KRKRRESEAD (99 aa)). A compositionally biased stretch (polar residues) spans 630 to 639 (KNGTSGTTAG). Residues 645 to 657 (KKKKKKDKKKKNK) are compositionally biased toward basic residues. The span at 681 to 692 (SKEDRMDDEERG) shows a compositional bias: basic and acidic residues. Positions 693 to 703 (KKSKKSRKRSP) are enriched in basic residues.

In Caenorhabditis elegans, this protein is WW domain-containing protein ZK1098.1.